Reading from the N-terminus, the 440-residue chain is Chitinase-like protein Idgf2 (440 aa).

Positions 1-20 are cleaved as a signal peptide; the sequence is MKAWIWFTFVACLFAASTEA. The GH18 domain occupies 22–440; it reads SNLVCYYDSS…PILRAIKYRL (419 aa). A disulfide bridge connects residues Cys-26 and Cys-53. A glycan (N-linked (GlcNAc...) asparagine) is linked at Asn-220. Cys-342 and Cys-425 are oxidised to a cystine.

It belongs to the glycosyl hydrolase 18 family. IDGF subfamily. In terms of processing, glycosylated. In terms of tissue distribution, primarily expressed in yolk cells and fat body. In larvae, it is expressed in the imaginal ring and weakly expressed in imaginal disks. More strongly expressed than Idgf1 and Idgf3.

Its subcellular location is the secreted. Cooperates with insulin-like peptides to stimulate the proliferation, polarization and motility of imaginal disk cells. May act by stabilizing the binding of insulin-like peptides to its receptor through a simultaneous interaction with both molecules to form a multiprotein signaling complex. This chain is Chitinase-like protein Idgf2 (Idgf2), found in Drosophila melanogaster (Fruit fly).